The primary structure comprises 635 residues: Extracellular metalloproteinase MEP (635 aa).

Positions 1–19 are cleaved as a signal peptide; the sequence is MRAFLLASLASLPAVNVYA. A propeptide spanning residues 20–244 is cleaved from the precursor; that stretch reads HPTHNSRGLT…VHAVVDYAAE (225 aa). N-linked (GlcNAc...) asparagine glycosylation is found at N287, N302, and N336. Residue H429 coordinates Zn(2+). Residue E430 is part of the active site. Residue H433 participates in Zn(2+) binding.

It belongs to the peptidase M36 family. The cofactor is Zn(2+).

It localises to the secreted. In terms of biological role, secreted metalloproteinase that allows assimilation of proteinaceous substrates. This is Extracellular metalloproteinase MEP (MEP) from Leptosphaeria maculans (strain JN3 / isolate v23.1.3 / race Av1-4-5-6-7-8) (Blackleg fungus).